We begin with the raw amino-acid sequence, 212 residues long: Agamous-like MADS-box protein MADS9 (212 aa).

Residues 1-61 enclose the MADS-box domain; the sequence is MGRGKIEIKR…GKMHEYCSPS (61 aa). The 87-residue stretch at 84–170 folds into the K-box domain; the sequence is HENLNNELDR…NYIVHHQGMP (87 aa).

As to expression, expressed during flower development in stamens and petals.

It localises to the nucleus. Functionally, probable transcription factor that may play role in specifying stamen and petal organ identity. This Vitis vinifera (Grape) protein is Agamous-like MADS-box protein MADS9.